The chain runs to 146 residues: UPF0306 protein CKO_04548 (146 aa).

The protein belongs to the UPF0306 family.

In Citrobacter koseri (strain ATCC BAA-895 / CDC 4225-83 / SGSC4696), this protein is UPF0306 protein CKO_04548.